The primary structure comprises 421 residues: BEN domain-containing protein 5 (421 aa).

Lys-133 bears the N6-acetyllysine mark. A coiled-coil region spans residues 180 to 243; that stretch reads RALYEELLRN…LNRRLQDVLL (64 aa). Residue Lys-258 forms a Glycyl lysine isopeptide (Lys-Gly) (interchain with G-Cter in SUMO2) linkage. One can recognise a BEN domain in the interval 302-408; it reads GSGIWVDEEK…EKIMDINKSC (107 aa).

Functionally, acts as a transcriptional repressor. This Mus musculus (Mouse) protein is BEN domain-containing protein 5 (Bend5).